The following is a 387-amino-acid chain: Zn(2)-C6 fungal-type trascription factor aoiH (387 aa).

The zn(2)-C6 fungal-type DNA-binding region spans 21–48; the sequence is CDFCALSKVKCDRGQPQCVRCIKSGIDC. Positions 68-87 are enriched in polar residues; the sequence is VRSTSATTQGTRRKQQTIAQ. The disordered stretch occupies residues 68-94; the sequence is VRSTSATTQGTRRKQQTIAQHSPRRRI.

It localises to the nucleus. Functionally, transcription factor; part of the gene cluster that mediates the biosynthesis of a methylated derivative of known natural products orthosporin and diaporthin. Positively regultaes the expression of the non-reducing polyketide synthase aoiG and the O-methyltransferase aoiO. This chain is Zn(2)-C6 fungal-type trascription factor aoiH, found in Aspergillus oryzae (strain ATCC 42149 / RIB 40) (Yellow koji mold).